The primary structure comprises 88 residues: Small ribosomal subunit protein bS20 (88 aa).

It belongs to the bacterial ribosomal protein bS20 family.

Binds directly to 16S ribosomal RNA. The sequence is that of Small ribosomal subunit protein bS20 from Clostridium botulinum (strain 657 / Type Ba4).